The following is a 1070-amino-acid chain: DNA-directed RNA polymerase subunit beta (1070 aa).

The protein belongs to the RNA polymerase beta chain family. As to quaternary structure, in plastids the minimal PEP RNA polymerase catalytic core is composed of four subunits: alpha, beta, beta', and beta''. When a (nuclear-encoded) sigma factor is associated with the core the holoenzyme is formed, which can initiate transcription.

It localises to the plastid. It is found in the chloroplast. The catalysed reaction is RNA(n) + a ribonucleoside 5'-triphosphate = RNA(n+1) + diphosphate. In terms of biological role, DNA-dependent RNA polymerase catalyzes the transcription of DNA into RNA using the four ribonucleoside triphosphates as substrates. In Solanum tuberosum (Potato), this protein is DNA-directed RNA polymerase subunit beta.